A 452-amino-acid chain; its full sequence is Trigger factor (452 aa).

A PPIase FKBP-type domain is found at 171-256 (GDRVKVNFKG…ATAIETPEEK (86 aa)).

This sequence belongs to the FKBP-type PPIase family. Tig subfamily.

The protein localises to the cytoplasm. It carries out the reaction [protein]-peptidylproline (omega=180) = [protein]-peptidylproline (omega=0). Involved in protein export. Acts as a chaperone by maintaining the newly synthesized protein in an open conformation. Functions as a peptidyl-prolyl cis-trans isomerase. The protein is Trigger factor of Bradyrhizobium sp. (strain BTAi1 / ATCC BAA-1182).